We begin with the raw amino-acid sequence, 202 residues long: CASP-like protein 1E1 (202 aa).

The Cytoplasmic portion of the chain corresponds to M1 to S33. Residues E34–V54 traverse the membrane as a helical segment. Residues D55 to A85 lie on the Extracellular side of the membrane. Residues F86–L106 traverse the membrane as a helical segment. Over V107–R118 the chain is Cytoplasmic. The chain crosses the membrane as a helical span at residues V119–A139. Residues A140–A172 lie on the Extracellular side of the membrane. Residues S173–L193 form a helical membrane-spanning segment. The Cytoplasmic portion of the chain corresponds to N194–K202.

The protein belongs to the Casparian strip membrane proteins (CASP) family. In terms of assembly, homodimer and heterodimers.

The protein localises to the cell membrane. In Vitis vinifera (Grape), this protein is CASP-like protein 1E1.